The primary structure comprises 206 residues: Ras-related protein RABG3f (206 aa).

15-23 (GDSGVGKTS) serves as a coordination point for GTP. The Effector region signature appears at 37–45 (YKATIGADF). GTP contacts are provided by residues 63-67 (DTAGQ), 125-128 (NKVD), and 158-159 (SA). S-geranylgeranyl cysteine attachment occurs at residues C204 and C206. Cysteine methyl ester is present on C206.

This sequence belongs to the small GTPase superfamily. Rab family. As to quaternary structure, interacts with VPS35A.

The protein resides in the endosome membrane. The protein localises to the vacuole membrane. It localises to the prevacuolar compartment membrane. With respect to regulation, regulated by guanine nucleotide exchange factors (GEFs) which promote the exchange of bound GDP for free GTP. Regulated by the MON1-CCZ1 complex which serves as a link between Rab5 and Rab7 protein families in PVCs and mediates PVC maturation. Functionally, essential for trafficking from prevacuolar compartments to vacuoles. Involved in the trafficking of newly synthesized protein to vacuoles. Essential for plant growth. Participates in the recruitment of the core retromer components to the endosomal membrane by interacting with VPS35A. This chain is Ras-related protein RABG3f (RABG3F), found in Arabidopsis thaliana (Mouse-ear cress).